The sequence spans 138 residues: Transcription antitermination protein NusB (138 aa).

The protein belongs to the NusB family.

In terms of biological role, involved in transcription antitermination. Required for transcription of ribosomal RNA (rRNA) genes. Binds specifically to the boxA antiterminator sequence of the ribosomal RNA (rrn) operons. The polypeptide is Transcription antitermination protein NusB (Helicobacter pylori (strain ATCC 700392 / 26695) (Campylobacter pylori)).